A 208-amino-acid polypeptide reads, in one-letter code: ATP synthase subunit b (208 aa).

The N-terminal stretch at 1 to 27 (MVKAKKLVFKWSLLVFSFFTLSLFLVS) is a signal peptide. The N-palmitoyl cysteine moiety is linked to residue Cys28. A lipid anchor (S-diacylglycerol cysteine) is attached at Cys28. Residues 49–69 (WVFITHLLAFFILLTLMIFLF) traverse the membrane as a helical segment.

Belongs to the ATPase B chain family. F-type ATPases have 2 components, F(1) - the catalytic core - and F(0) - the membrane proton channel. F(1) has five subunits: alpha(3), beta(3), gamma(1), delta(1), epsilon(1). F(0) has three main subunits: a(1), b(2) and c(10-14). The alpha and beta chains form an alternating ring which encloses part of the gamma chain. F(1) is attached to F(0) by a central stalk formed by the gamma and epsilon chains, while a peripheral stalk is formed by the delta and b chains.

It is found in the cell membrane. Functionally, f(1)F(0) ATP synthase produces ATP from ADP in the presence of a proton or sodium gradient. F-type ATPases consist of two structural domains, F(1) containing the extramembraneous catalytic core and F(0) containing the membrane proton channel, linked together by a central stalk and a peripheral stalk. During catalysis, ATP synthesis in the catalytic domain of F(1) is coupled via a rotary mechanism of the central stalk subunits to proton translocation. In terms of biological role, component of the F(0) channel, it forms part of the peripheral stalk, linking F(1) to F(0). This is ATP synthase subunit b from Mycoplasma genitalium (strain ATCC 33530 / DSM 19775 / NCTC 10195 / G37) (Mycoplasmoides genitalium).